Here is a 1158-residue protein sequence, read N- to C-terminus: Adipocyte enhancer-binding protein 1 (1158 aa).

The N-terminal stretch at 1-25 is a signal peptide; sequence MAAVRGAPLLSCLLALLALCPGGRP. The interval 41–387 is disordered; the sequence is FLSELEPEPR…TPTEKVKCPP (347 aa). Over residues 45–55 the composition is skewed to acidic residues; that stretch reads LEPEPREDDVE. Residues 100-110 are compositionally biased toward basic and acidic residues; the sequence is DKGPKVPKESL. Residues 116 to 166 show a composition bias toward basic residues; that stretch reads PPKKGKEKPPKATKKPKEKPPKATKKPKEKPPKATKKPKEKPPKATKKPPS. Pro residues predominate over residues 182 to 192; sequence PLPPPPSPGPE. Low complexity predominate over residues 193–202; the sequence is ELPQEGGAPL. Positions 211–223 are enriched in basic and acidic residues; that stretch reads EETHVEAREHQPE. The segment covering 252-266 has biased composition (basic residues); sequence RQKQPRPPPSRRRRP. The span at 267-289 shows a compositional bias: basic and acidic residues; that stretch reads ERVWPEPPEEKAPAPAPEERIEP. Residues 290–300 show a composition bias toward pro residues; that stretch reads PVKPLLPPLPP. The span at 326–371 shows a compositional bias: basic and acidic residues; that stretch reads PDAERQTDEEKEELKKPKKEDSSPKEETDKWAVEKGKDHKEPRKGE. The 158-residue stretch at 383–540 folds into the F5/8 type C domain; it reads VKCPPIGMES…LCMRLEVLGC (158 aa). The required for DNA-binding and interaction with NFKBIA stretch occupies residues 390-555; it reads MESHRIEDNQ…YSYYAQNEVV (166 aa). Residues 421–624 form an interaction with MAPK1 and MAPK3 region; the sequence is TGATEDDYYD…EPEFRYTAGI (204 aa). Asn-528 is a glycosylation site (N-linked (GlcNAc...) asparagine). Residues 555–985 are interaction with PTEN; the sequence is VATDDLDFRH…TQCNFILARS (431 aa). Residues 563-904 enclose the Peptidase M14 domain; sequence RHHSYKDMRQ…EALLTFMEQV (342 aa). N-linked (GlcNAc...) asparagine glycosylation is present at Asn-922. Residues 941–1158 are required for transcriptional repression; sequence DYWRILNPGE…ETYTVNFGDF (218 aa). The interval 1006 to 1158 is interaction with MAPK1 and MAPK3; the sequence is DPSRPMTPQQ…ETYTVNFGDF (153 aa). Residues 1108 to 1137 show a composition bias toward acidic residues; that stretch reads EFETQLEPEFETQLEPEFEEEEEEEKEEEI. The disordered stretch occupies residues 1108 to 1141; that stretch reads EFETQLEPEFETQLEPEFEEEEEEEKEEEIATGQ.

Belongs to the peptidase M14 family. Isoform 1: Interacts with different types of collagen, including collagens I, III, and V. Isoform 2: Interacts with GNG5, NFKBIA, MAPK1, MAPK3 and PTEN. Interaction with MAPK1 may stimulate DNA-binding. May interact with calmodulin. Binds to DNA in vitro. Phosphorylated by MAPK1 in vitro. Expressed in osteoblast and visceral fat.

It localises to the secreted. It is found in the cytoplasm. The protein localises to the nucleus. In terms of biological role, as a positive regulator of collagen fibrillogenesis, it is probably involved in the organization and remodeling of the extracellular matrix. Its function is as follows. May positively regulate MAP-kinase activity in adipocytes, leading to enhanced adipocyte proliferation and reduced adipocyte differentiation. May also positively regulate NF-kappa-B activity in macrophages by promoting the phosphorylation and subsequent degradation of I-kappa-B-alpha (NFKBIA), leading to enhanced macrophage inflammatory responsiveness. Can act as a transcriptional repressor. The chain is Adipocyte enhancer-binding protein 1 (AEBP1) from Homo sapiens (Human).